A 137-amino-acid polypeptide reads, in one-letter code: Large ribosomal subunit protein uL16 (137 aa).

Belongs to the universal ribosomal protein uL16 family. In terms of assembly, part of the 50S ribosomal subunit.

Functionally, binds 23S rRNA and is also seen to make contacts with the A and possibly P site tRNAs. The protein is Large ribosomal subunit protein uL16 of Wolbachia pipientis subsp. Culex pipiens (strain wPip).